We begin with the raw amino-acid sequence, 347 residues long: Protein PET130 (347 aa).

The protein localises to the mitochondrion matrix. This Saccharomyces cerevisiae (strain ATCC 204508 / S288c) (Baker's yeast) protein is Protein PET130 (PET130).